Consider the following 189-residue polypeptide: UPF0301 protein PA14_05290 (189 aa).

The protein belongs to the UPF0301 (AlgH) family.

This chain is UPF0301 protein PA14_05290, found in Pseudomonas aeruginosa (strain UCBPP-PA14).